Here is a 211-residue protein sequence, read N- to C-terminus: Ribonuclease HII (211 aa).

Residues 11–200 (EFIAGVDEVG…VKKLLSTLLS (190 aa)) enclose the RNase H type-2 domain. The a divalent metal cation site is built by aspartate 17, glutamate 18, and aspartate 109.

This sequence belongs to the RNase HII family. Mn(2+) serves as cofactor. The cofactor is Mg(2+).

It localises to the cytoplasm. It carries out the reaction Endonucleolytic cleavage to 5'-phosphomonoester.. Its function is as follows. Endonuclease that specifically degrades the RNA of RNA-DNA hybrids. The sequence is that of Ribonuclease HII from Histophilus somni (strain 2336) (Haemophilus somnus).